A 442-amino-acid chain; its full sequence is Exodeoxyribonuclease 7 large subunit (442 aa).

Positions 1 to 38 (MSDSTQFSLFDSGDDEPAKVTAPKRKVARKKRSSSSSD) are disordered. The span at 22 to 33 (APKRKVARKKRS) shows a compositional bias: basic residues.

The protein belongs to the XseA family. As to quaternary structure, heterooligomer composed of large and small subunits.

The protein resides in the cytoplasm. It catalyses the reaction Exonucleolytic cleavage in either 5'- to 3'- or 3'- to 5'-direction to yield nucleoside 5'-phosphates.. Its function is as follows. Bidirectionally degrades single-stranded DNA into large acid-insoluble oligonucleotides, which are then degraded further into small acid-soluble oligonucleotides. In Rhodopirellula baltica (strain DSM 10527 / NCIMB 13988 / SH1), this protein is Exodeoxyribonuclease 7 large subunit.